Here is a 399-residue protein sequence, read N- to C-terminus: Bombesin receptor subtype-3 (399 aa).

At 1–41 the chain is on the extracellular side; sequence MAQRQPHSPNQTLISITNDTESSSSVVSNDNTNKGWSGDNS. N-linked (GlcNAc...) asparagine glycans are attached at residues asparagine 10 and asparagine 18. Residues 42–63 traverse the membrane as a helical segment; the sequence is PGIEALCAIYITYAVIISVGIL. Topologically, residues 64–82 are cytoplasmic; it reads GNAILIKVFFKTKSMQTVP. The helical transmembrane segment at 83–103 threads the bilayer; that stretch reads NIFITSLAFGDLLLLLTCVPV. Topologically, residues 104-121 are extracellular; it reads DATHYLAEGWLFGRIGCK. A disulfide bridge connects residues cysteine 120 and cysteine 203. Residues 122 to 143 form a helical membrane-spanning segment; that stretch reads VLSFIRLTSVGVSVFTLTILSA. The Cytoplasmic segment spans residues 144 to 163; that stretch reads DRYKAVVKPLERQPSNAILK. Residues 164–184 traverse the membrane as a helical segment; sequence TCVKAGCVWIVSMIFALPEAI. Topologically, residues 185-220 are extracellular; sequence FSNVYTFRDPNKNMTFESCTSYPVSKKLLQEIHSLL. A helical transmembrane segment spans residues 221 to 241; sequence CFLVFYIIPLSIISVYYSLIA. The Cytoplasmic portion of the chain corresponds to 242 to 272; the sequence is RTLYKSTLNIPTEEQSHARKQIESRKRIART. Residues 273-293 form a helical membrane-spanning segment; it reads VLVLVALFALCWLPNHLLYLY. At 294–313 the chain is on the extracellular side; that stretch reads HSFTSQTYVDPSAMHFIFTI. A helical transmembrane segment spans residues 314-333; it reads FSRVLAFSNSCVNPFALYWL. Over 334–399 the chain is Cytoplasmic; the sequence is SKSFQKHFKA…CSVKQAEDRF (66 aa). Cysteine 347 is lipidated: S-palmitoyl cysteine.

It belongs to the G-protein coupled receptor 1 family. Interacts with C6orf89. As to expression, in germ cells in testis. Lung carcinoma cells.

Its subcellular location is the cell membrane. Functionally, role in sperm cell division, maturation, or function. This receptor mediates its action by association with G proteins that activate a phosphatidylinositol-calcium second messenger system. This Homo sapiens (Human) protein is Bombesin receptor subtype-3 (BRS3).